We begin with the raw amino-acid sequence, 82 residues long: Modifier of protein aggregation 4 (82 aa).

Basic and acidic residues predominate over residues 1–23 (MTRGNQRDLAREKNQKKLADQKK). Disordered stretches follow at residues 1–41 (MTRG…MDAR) and 63–82 (EAAA…PLKM).

Belongs to the SERF family.

The protein resides in the cytoplasm. It localises to the cytosol. Its subcellular location is the nucleus. Positive regulator of protein aggregation and age-related proteotoxicity. Induces conformational changes in aggregation-prone proteins, driving them into compact formations preceding the formation of aggregates. In Caenorhabditis elegans, this protein is Modifier of protein aggregation 4.